The sequence spans 232 residues: Large ribosomal subunit protein uL1 (232 aa).

Belongs to the universal ribosomal protein uL1 family. As to quaternary structure, part of the 50S ribosomal subunit.

Binds directly to 23S rRNA. The L1 stalk is quite mobile in the ribosome, and is involved in E site tRNA release. Its function is as follows. Protein L1 is also a translational repressor protein, it controls the translation of the L11 operon by binding to its mRNA. This Bacillus cereus (strain ATCC 14579 / DSM 31 / CCUG 7414 / JCM 2152 / NBRC 15305 / NCIMB 9373 / NCTC 2599 / NRRL B-3711) protein is Large ribosomal subunit protein uL1.